Reading from the N-terminus, the 90-residue chain is Small ribosomal subunit protein uS19 (90 aa).

This sequence belongs to the universal ribosomal protein uS19 family.

Its function is as follows. Protein S19 forms a complex with S13 that binds strongly to the 16S ribosomal RNA. In Thioalkalivibrio sulfidiphilus (strain HL-EbGR7), this protein is Small ribosomal subunit protein uS19.